The sequence spans 370 residues: Capsular polysaccharide phosphotransferase (370 aa).

This sequence belongs to the stealth family.

Its function is as follows. Part of a capsular polysaccharide synthesis locus. The polypeptide is Capsular polysaccharide phosphotransferase (Actinobacillus suis).